Consider the following 365-residue polypeptide: Chorismate synthase (365 aa).

NADP(+)-binding residues include arginine 48 and arginine 54. FMN-binding positions include 125–127, 238–239, glycine 278, 293–297, and arginine 319; these read RSS, NA, and KPTSS.

The protein belongs to the chorismate synthase family. As to quaternary structure, homotetramer. It depends on FMNH2 as a cofactor.

The enzyme catalyses 5-O-(1-carboxyvinyl)-3-phosphoshikimate = chorismate + phosphate. It participates in metabolic intermediate biosynthesis; chorismate biosynthesis; chorismate from D-erythrose 4-phosphate and phosphoenolpyruvate: step 7/7. Its function is as follows. Catalyzes the anti-1,4-elimination of the C-3 phosphate and the C-6 proR hydrogen from 5-enolpyruvylshikimate-3-phosphate (EPSP) to yield chorismate, which is the branch point compound that serves as the starting substrate for the three terminal pathways of aromatic amino acid biosynthesis. This reaction introduces a second double bond into the aromatic ring system. The protein is Chorismate synthase of Janthinobacterium sp. (strain Marseille) (Minibacterium massiliensis).